A 201-amino-acid polypeptide reads, in one-letter code: dITP/XTP pyrophosphatase (201 aa).

8 to 13 contacts substrate; it reads TNNENK. Mg(2+) is bound by residues glutamate 41 and aspartate 73. Catalysis depends on aspartate 73, which acts as the Proton acceptor. Substrate is bound by residues serine 74, 154–157, lysine 177, and 182–183; these read FGYD and HR.

The protein belongs to the HAM1 NTPase family. In terms of assembly, homodimer. Mg(2+) is required as a cofactor.

The catalysed reaction is XTP + H2O = XMP + diphosphate + H(+). It catalyses the reaction dITP + H2O = dIMP + diphosphate + H(+). The enzyme catalyses ITP + H2O = IMP + diphosphate + H(+). In terms of biological role, pyrophosphatase that catalyzes the hydrolysis of nucleoside triphosphates to their monophosphate derivatives, with a high preference for the non-canonical purine nucleotides XTP (xanthosine triphosphate), dITP (deoxyinosine triphosphate) and ITP. Seems to function as a house-cleaning enzyme that removes non-canonical purine nucleotides from the nucleotide pool, thus preventing their incorporation into DNA/RNA and avoiding chromosomal lesions. This Clostridium tetani (strain Massachusetts / E88) protein is dITP/XTP pyrophosphatase.